Consider the following 319-residue polypeptide: Large ribosomal subunit protein uL10 (319 aa).

The segment covering 286 to 295 (ADSGAAAPSA) has biased composition (low complexity). A disordered region spans residues 286–319 (ADSGAAAPSAAKEEEKKEEPEEESDGDLGMSLFD).

The protein belongs to the universal ribosomal protein uL10 family. In terms of assembly, P0 forms a pentameric complex by interaction with dimers of P1 and P2. Interacts with NSF. In terms of processing, phosphorylated. Highly expressed in stems, inflorescences and immature seeds (at protein level). Expressed in leaves and mature seeds (at protein level).

Its function is as follows. Ribosomal protein P0 is the functional equivalent of E.coli protein L10. This is Large ribosomal subunit protein uL10 from Oryza sativa subsp. japonica (Rice).